The following is a 231-amino-acid chain: Small ribosomal subunit protein uS2 (231 aa).

Residues Met-1–Glu-23 are disordered. Basic and acidic residues predominate over residues Ser-7–Glu-23.

Belongs to the universal ribosomal protein uS2 family.

In Saccharolobus solfataricus (strain ATCC 35092 / DSM 1617 / JCM 11322 / P2) (Sulfolobus solfataricus), this protein is Small ribosomal subunit protein uS2 (rps2).